The chain runs to 141 residues: Protein KRTCAP2 homolog (141 aa).

Helical transmembrane passes span Val-11–Cys-31, Val-42–Asn-62, Ala-74–Val-94, and Val-97–Ser-117.

This sequence belongs to the KRTCAP2 family. As to quaternary structure, component of the oligosaccharyltransferase (OST) complex.

It localises to the membrane. Its function is as follows. Subunit of the oligosaccharyl transferase (OST) complex that catalyzes the initial transfer of a defined glycan (Glc(3)Man(9)GlcNAc(2) in eukaryotes) from the lipid carrier dolichol-pyrophosphate to an asparagine residue within an Asn-X-Ser/Thr consensus motif in nascent polypeptide chains, the first step in protein N-glycosylation. N-glycosylation occurs cotranslationally and the complex associates with the Sec61 complex at the channel-forming translocon complex that mediates protein translocation across the endoplasmic reticulum (ER). All subunits are required for a maximal enzyme activity. This is Protein KRTCAP2 homolog from Drosophila melanogaster (Fruit fly).